Here is a 444-residue protein sequence, read N- to C-terminus: MAERKYFGTDGVRGKVGSYPITPDFVLKLGWAAGKVLATQGTGKVLIGKDTRISGYMLESALEAGLAAAGLSAAFTGPMPTPAIAYLTRTFRSEAGIVISASHNPFYDNGIKFFSAQGTKLPDDVEEAIEAMLEQPMDCVESAKLGRASRINDAAGRYIEFCKSTFPAHLSLDKYKIVVDCANGATYHIAPNVMRELGAEVIEIGTQPDGMNINENCGATDIKALQNQVLETKADIGLAYDGDGDRLIMVDHFGNKVDGDQILFIIAREALRSGNLKGGVVGTLMSNMSLELALKQLGIPFVRANVGDRYVLEKMQEYNWILGGENSGHIIIADKNTTGDGVIASLAVLAAMVQHKLSLNELASAVKLFPQVLINVRFAGGANPLESDAVKAVATEVEKQLAGKGRILLRKSGTEPLIRVMVECEDAELAQLSAEKIAEAVRSN.

Residue S102 is the Phosphoserine intermediate of the active site. Mg(2+) contacts are provided by S102, D241, D243, and D245. Residue S102 is modified to Phosphoserine.

This sequence belongs to the phosphohexose mutase family. It depends on Mg(2+) as a cofactor. Post-translationally, activated by phosphorylation.

It carries out the reaction alpha-D-glucosamine 1-phosphate = D-glucosamine 6-phosphate. In terms of biological role, catalyzes the conversion of glucosamine-6-phosphate to glucosamine-1-phosphate. This chain is Phosphoglucosamine mutase, found in Histophilus somni (strain 2336) (Haemophilus somnus).